We begin with the raw amino-acid sequence, 59 residues long: Cytochrome c oxidase subunit 7 (59 aa).

Over methionine 1–proline 24 the chain is Mitochondrial matrix. A helical transmembrane segment spans residues glycine 25 to alanine 47. At serine 48–phenylalanine 59 the chain is on the mitochondrial intermembrane side.

This sequence belongs to the cytochrome c oxidase subunit 7 family. As to quaternary structure, component of the cytochrome c oxidase (complex IV, CIV), a multisubunit enzyme composed of a catalytic core of 3 subunits and several supernumerary subunits. The complex exists as a monomer or a dimer and forms supercomplexes (SCs) in the inner mitochondrial membrane with ubiquinol-cytochrome c oxidoreductase (cytochrome b-c1 complex, complex III, CIII).

The protein localises to the mitochondrion inner membrane. It participates in energy metabolism; oxidative phosphorylation. Its function is as follows. Component of the cytochrome c oxidase, the last enzyme in the mitochondrial electron transport chain which drives oxidative phosphorylation. The respiratory chain contains 3 multisubunit complexes succinate dehydrogenase (complex II, CII), ubiquinol-cytochrome c oxidoreductase (cytochrome b-c1 complex, complex III, CIII) and cytochrome c oxidase (complex IV, CIV), that cooperate to transfer electrons derived from NADH and succinate to molecular oxygen, creating an electrochemical gradient over the inner membrane that drives transmembrane transport and the ATP synthase. Cytochrome c oxidase is the component of the respiratory chain that catalyzes the reduction of oxygen to water. Electrons originating from reduced cytochrome c in the intermembrane space (IMS) are transferred via the dinuclear copper A center (CU(A)) of subunit 2 and heme A of subunit 1 to the active site in subunit 1, a binuclear center (BNC) formed by heme A3 and copper B (CU(B)). The BNC reduces molecular oxygen to 2 water molecules using 4 electrons from cytochrome c in the IMS and 4 protons from the mitochondrial matrix. The polypeptide is Cytochrome c oxidase subunit 7 (cox7) (Schizosaccharomyces pombe (strain 972 / ATCC 24843) (Fission yeast)).